The primary structure comprises 388 residues: Chorismate synthase (388 aa).

NADP(+) contacts are provided by Arg-39 and Arg-45. Residues 132 to 134, 251 to 252, Gly-296, 311 to 315, and Arg-337 contribute to the FMN site; these read RSS, NA, and KPIPT.

Belongs to the chorismate synthase family. Homotetramer. FMNH2 is required as a cofactor.

It catalyses the reaction 5-O-(1-carboxyvinyl)-3-phosphoshikimate = chorismate + phosphate. The protein operates within metabolic intermediate biosynthesis; chorismate biosynthesis; chorismate from D-erythrose 4-phosphate and phosphoenolpyruvate: step 7/7. In terms of biological role, catalyzes the anti-1,4-elimination of the C-3 phosphate and the C-6 proR hydrogen from 5-enolpyruvylshikimate-3-phosphate (EPSP) to yield chorismate, which is the branch point compound that serves as the starting substrate for the three terminal pathways of aromatic amino acid biosynthesis. This reaction introduces a second double bond into the aromatic ring system. The protein is Chorismate synthase of Staphylococcus haemolyticus (strain JCSC1435).